Here is a 130-residue protein sequence, read N- to C-terminus: Small ribosomal subunit protein uS8 (130 aa).

It belongs to the universal ribosomal protein uS8 family. In terms of assembly, part of the 30S ribosomal subunit. Contacts proteins S5 and S12.

One of the primary rRNA binding proteins, it binds directly to 16S rRNA central domain where it helps coordinate assembly of the platform of the 30S subunit. The sequence is that of Small ribosomal subunit protein uS8 from Klebsiella pneumoniae (strain 342).